Reading from the N-terminus, the 366-residue chain is Alanine racemase (366 aa).

Catalysis depends on K35, which acts as the Proton acceptor; specific for D-alanine. At K35 the chain carries N6-(pyridoxal phosphate)lysine. R130 lines the substrate pocket. Y254 functions as the Proton acceptor; specific for L-alanine in the catalytic mechanism. Residue M302 participates in substrate binding.

This sequence belongs to the alanine racemase family. Pyridoxal 5'-phosphate serves as cofactor.

It catalyses the reaction L-alanine = D-alanine. It functions in the pathway amino-acid biosynthesis; D-alanine biosynthesis; D-alanine from L-alanine: step 1/1. Functionally, catalyzes the interconversion of L-alanine and D-alanine. May also act on other amino acids. This is Alanine racemase (alr) from Variovorax paradoxus (strain S110).